Reading from the N-terminus, the 67-residue chain is uncharacterized protein (67 aa).

It belongs to the flocculin family.

This is an uncharacterized protein from Saccharomyces cerevisiae (strain ATCC 204508 / S288c) (Baker's yeast).